The sequence spans 464 residues: Argininosuccinate lyase (464 aa).

At alanine 2 the chain carries N-acetylalanine. Lysine 7 is subject to N6-acetyllysine. Serine 27 serves as a coordination point for 2-(N(omega)-L-arginino)succinate. Lysine 69 is modified (N6-acetyllysine). 2 residues coordinate 2-(N(omega)-L-arginino)succinate: asparagine 114 and threonine 159. The active-site Proton acceptor is histidine 160. Serine 281 functions as the Proton donor in the catalytic mechanism. Lysine 288 carries the post-translational modification N6-acetyllysine. Residues asparagine 289, tyrosine 321, glutamine 326, and lysine 329 each coordinate 2-(N(omega)-L-arginino)succinate.

It belongs to the lyase 1 family. Argininosuccinate lyase subfamily. Homotetramer. Forms tissue-specific complexes with ASS1, SLC7A1, HSP90AA1 and nitric oxide synthase NOS1, NOS2 or NOS3; the complex maintenance is independent of ASL catalytic function. Acetylation modifies enzyme activity in response to alterations of extracellular nutrient availability. Acetylation increased with trichostin A (TSA) or with nicotinamide (NAM). Glucose increases acetylation by about a factor of 3 with decreasing enzyme activity. Acetylation on Lys-288 is decreased on the addition of extra amino acids resulting in activation of enzyme activity.

It catalyses the reaction 2-(N(omega)-L-arginino)succinate = fumarate + L-arginine. The protein operates within amino-acid biosynthesis; L-arginine biosynthesis; L-arginine from L-ornithine and carbamoyl phosphate: step 3/3. Its pathway is nitrogen metabolism; urea cycle; L-arginine and fumarate from (N(omega)-L-arginino)succinate: step 1/1. Enzyme activity is regulated by acetylation. In terms of biological role, catalyzes the reversible cleavage of L-argininosuccinate to fumarate and L-arginine, an intermediate step reaction in the urea cycle mostly providing for hepatic nitrogen detoxification into excretable urea as well as de novo L-arginine synthesis in nonhepatic tissues. Essential regulator of intracellular and extracellular L-arginine pools. As part of citrulline-nitric oxide cycle, forms tissue-specific multiprotein complexes with argininosuccinate synthase ASS1, transport protein SLC7A1 and nitric oxide synthase NOS1, NOS2 or NOS3, allowing for cell-autonomous L-arginine synthesis while channeling extracellular L-arginine to nitric oxide synthesis pathway. This Macaca fascicularis (Crab-eating macaque) protein is Argininosuccinate lyase (ASL).